We begin with the raw amino-acid sequence, 461 residues long: Spermidine coumaroyl-CoA acyltransferase (461 aa).

Catalysis depends on proton acceptor residues His168 and Asp393.

The protein belongs to the plant acyltransferase family. Monomer. Mainly expressed in roots at low levels, specifically, in the root tip.

It catalyses the reaction 2 (E)-4-coumaroyl-CoA + spermidine = N(1),N(8)-bis(coumaroyl)-spermidine + 2 CoA + 2 H(+). Its pathway is amine and polyamine metabolism; spermidine metabolism. Functionally, spermidine coumaroyl-CoA acyltransferase that mediates the conversion of spermidine into dicoumaroyl-spermidine. The polypeptide is Spermidine coumaroyl-CoA acyltransferase (Arabidopsis thaliana (Mouse-ear cress)).